The sequence spans 305 residues: tRNA pseudouridine synthase B (305 aa).

The active-site Nucleophile is the aspartate 48.

This sequence belongs to the pseudouridine synthase TruB family. Type 1 subfamily.

The enzyme catalyses uridine(55) in tRNA = pseudouridine(55) in tRNA. Its function is as follows. Responsible for synthesis of pseudouridine from uracil-55 in the psi GC loop of transfer RNAs. In Mannheimia succiniciproducens (strain KCTC 0769BP / MBEL55E), this protein is tRNA pseudouridine synthase B.